Here is a 246-residue protein sequence, read N- to C-terminus: Exosome complex component Rrp41 (246 aa).

The protein belongs to the RNase PH family. Rrp41 subfamily. In terms of assembly, component of the archaeal exosome complex. Forms a hexameric ring-like arrangement composed of 3 Rrp41-Rrp42 heterodimers. The hexameric ring associates with a trimer of Rrp4 and/or Csl4 subunits.

The protein resides in the cytoplasm. In terms of biological role, catalytic component of the exosome, which is a complex involved in RNA degradation. Has 3'-&gt;5' exoribonuclease activity. Can also synthesize heteromeric RNA-tails. The chain is Exosome complex component Rrp41 from Pyrobaculum arsenaticum (strain DSM 13514 / JCM 11321 / PZ6).